The following is a 404-amino-acid chain: Sorting nexin-5 (404 aa).

Ala-2 is subject to N-acetylalanine. The PX domain maps to 25–172 (LNVDPSLQID…HVFLEYDQDL (148 aa)). Residues 40–46 (SERDKVK), 99–105 (FDGPREK), and 113–116 (EGSM) each bind a 1,2-diacyl-sn-glycero-3-phospho-(1D-myo-inositol-4,5-bisphosphate). The interaction with DOCK1 stretch occupies residues 169–261 (DQDLSVRRKN…HSLALEEPTV (93 aa)). Residues 183–200 (FGGFFKSVVKSADEVLFT) are membrane-binding amphipathic helix. Ser-193 carries the phosphoserine modification. Residues 202–404 (VKEVDDFFEQ…QSCIDLFKNN (203 aa)) enclose the BAR domain. Lys-275 carries the post-translational modification N6-acetyllysine.

The protein belongs to the sorting nexin family. In terms of assembly, forms heterodimers with BAR domain-containing sorting nexins SNX1 and SNX2; does not homodimerize. The heterodimers are proposed to self-assemble into helical arrays on the membrane to stabilize and expand local membrane curvature underlying endosomal tubule formation. Thought to be a component of the originally described retromer complex (also called SNX-BAR retromer) which is a pentamer containing the heterotrimeric retromer cargo-selective complex (CSC), also described as vacuolar protein sorting subcomplex (VPS), and a heterodimeric membrane-deforming subcomplex formed between SNX1 or SNX2 and SNX5 or SNX6 (also called SNX-BAR subcomplex); the respective CSC and SNX-BAR subcomplexes associate with low affinity. Interacts with SNX1, SNX2, VPS26A, VPS29, VPS35, DCTN1, DOCK1, MIB1, PIP5K1C isoform 3. Interacts with HGS; increased by PIP5K1C isoform 3 kinase activity and by PtdIns(3P) and/or PtdIns(3,4)P2. As to quaternary structure, (Microbial infection) Interacts with human cytomegalovirus proteins UL35 and UL35A; these interactions inhibit the ability of USP7 to form nuclear bodies.

It localises to the endosome. The protein resides in the early endosome. It is found in the early endosome membrane. The protein localises to the cell membrane. Its subcellular location is the cytoplasmic vesicle membrane. It localises to the cytoplasm. The protein resides in the cell projection. It is found in the phagocytic cup. The protein localises to the ruffle. Functionally, involved in several stages of intracellular trafficking. Interacts with membranes containing phosphatidylinositol 3-phosphate (PtdIns(3P)) or phosphatidylinositol 3,4-bisphosphate (PtdIns(3,4)P2). Acts in part as component of the retromer membrane-deforming SNX-BAR subcomplex. The SNX-BAR retromer mediates retrograde transport of cargo proteins from endosomes to the trans-Golgi network (TGN) and is involved in endosome-to-plasma membrane transport for cargo protein recycling. The SNX-BAR subcomplex functions to deform the donor membrane into a tubular profile called endosome-to-TGN transport carrier (ETC). Does not have in vitro vesicle-to-membrane remodeling activity. Involved in retrograde transport of lysosomal enzyme receptor IGF2R. May function as link between endosomal transport vesicles and dynactin. Plays a role in the internalization of EGFR after EGF stimulation. Involved in EGFR endosomal sorting and degradation; the function involves PIP5K1C isoform 3 and is retromer-independent. Together with PIP5K1C isoform 3 facilitates HGS interaction with ubiquitinated EGFR, which initiates EGFR sorting to intraluminal vesicles (ILVs) of the multivesicular body for subsequent lysosomal degradation. Involved in E-cadherin sorting and degradation; inhibits PIP5K1C isoform 3-mediated E-cadherin degradation. Plays a role in macropinocytosis. This is Sorting nexin-5 (SNX5) from Homo sapiens (Human).